We begin with the raw amino-acid sequence, 1712 residues long: Neurexin-2 (1712 aa).

An N-terminal signal peptide occupies residues 1–28 (MASGSRWRPTPPPLLLLLLLALAARADG). Residues 29–206 (LEFGGGPGQW…LRGATADPLC (178 aa)) form the Laminin G-like 1 domain. Residues 29–1636 (LEFGGGPGQW…EVIRESSSTT (1608 aa)) are Extracellular-facing. N-linked (GlcNAc...) asparagine glycosylation occurs at Asn-60. Positions 202 to 242 (ADPLCAPARNPCANGGLCTVLAPGEVGCDCSHTGFGGKFCS) constitute an EGF-like 1 domain. Disulfide bonds link Cys-206–Cys-219, Cys-213–Cys-229, and Cys-231–Cys-241. 2 Laminin G-like domains span residues 289-486 (VATF…SFRC) and 493-686 (DPVT…APFC). Asp-335 is a Ca(2+) binding site. A glycan (N-linked (GlcNAc...) asparagine) is linked at Asn-338. Leu-352 and Met-420 together coordinate Ca(2+). 5 cysteine pairs are disulfide-bonded: Cys-450–Cys-486, Cys-657–Cys-686, Cys-694–Cys-705, Cys-699–Cys-714, and Cys-716–Cys-726. The region spanning 690–727 (TLKQCASAPCRNGGVCREGWNRFICDCIGTGFLGRVCE) is the EGF-like 2 domain. 2 consecutive Laminin G-like domains span residues 732-904 (VLSY…ITYC) and 918-1093 (DPVT…ERGC). 2 residues coordinate Ca(2+): Asp-779 and Leu-796. The N-linked (GlcNAc...) asparagine glycan is linked to Asn-841. Arg-854 contributes to the Ca(2+) binding site. 4 disulfides stabilise this stretch: Cys-1065–Cys-1093, Cys-1100–Cys-1111, Cys-1105–Cys-1120, and Cys-1122–Cys-1132. Positions 1096–1133 (PSTTCTEESCANQGVCLQQWDGFTCDCTMTSYGGPVCN) constitute an EGF-like 3 domain. One can recognise a Laminin G-like 6 domain in the interval 1137-1345 (TTYIFGKGGA…HLRLVGEGPS (209 aa)). 2 residues coordinate Ca(2+): Asp-1189 and Val-1206. Asn-1236 carries N-linked (GlcNAc...) asparagine glycosylation. Ca(2+)-binding residues include Ile-1288 and Asn-1290. The disordered stretch occupies residues 1373-1392 (ATTTTRRGRSPTLRDSTTQN). O-linked (Xyl...) (heparan sulfate) serine glycosylation occurs at Ser-1400. 2 disordered regions span residues 1458–1489 (ATQD…CEEP) and 1525–1626 (TLLS…PGAV). Residues 1637–1657 (GMVVGIVAAAALCILILLYAM) traverse the membrane as a helical segment. Topologically, residues 1658–1712 (YKYRNRDEGSYQVDQSRNYISNSAQSNGAVVKEKAPAAPKTPSKAKKNKDKEYYV) are cytoplasmic. The interval 1679–1712 (NSAQSNGAVVKEKAPAAPKTPSKAKKNKDKEYYV) is disordered.

This sequence belongs to the neurexin family. The laminin G-like domain 1 binds to NXPH1. Interacts with PATJ. Interacts with CBLN1, CBLN2 and, less avidly, with CBLN4. Specific isoforms bind neuroligins NLGN1, NLGN2 and NLGN3. Specific isoforms bind to alpha-dystroglycan. Interacts (via Laminin G-like 1 domain) with IGSF21 (Ig-like 1 domain) in a trans-interaction manner. Interacts with CLSTN3. O-glycosylated; contains heparan sulfate. Heparan sulfate attachment is required for synapse development by mediating interactions with neuroligins. As to expression, predominantly expressed in brain.

Its subcellular location is the presynaptic cell membrane. Neuronal cell surface protein that may be involved in cell recognition and cell adhesion. May mediate intracellular signaling. The protein is Neurexin-2 (NRXN2) of Homo sapiens (Human).